We begin with the raw amino-acid sequence, 357 residues long: Heat-inducible transcription repressor HrcA (357 aa).

It belongs to the HrcA family.

Its function is as follows. Negative regulator of class I heat shock genes (grpE-dnaK-dnaJ and groELS operons). Prevents heat-shock induction of these operons. This Anabaena sp. (strain L31) protein is Heat-inducible transcription repressor HrcA.